The primary structure comprises 150 residues: Ribonuclease H (150 aa).

One can recognise an RNase H type-1 domain in the interval 7–148; that stretch reads ESNIVEIWTD…ADQLATKARM (142 aa). The Mg(2+) site is built by D16, E54, D76, and D140.

This sequence belongs to the RNase H family. As to quaternary structure, monomer. The cofactor is Mg(2+).

The protein resides in the cytoplasm. The enzyme catalyses Endonucleolytic cleavage to 5'-phosphomonoester.. Its function is as follows. Endonuclease that specifically degrades the RNA of RNA-DNA hybrids. In Granulibacter bethesdensis (strain ATCC BAA-1260 / CGDNIH1), this protein is Ribonuclease H.